Reading from the N-terminus, the 143-residue chain is MAIERTFSIIKPNAVAKNVIGSIFARFEAAGFKIVGTKMLHLTVEQARGFYAEHDGKPFFDGLVEFMTSGPILVSVLESENAVQRHRDLLGATNPANALAGTLRADYADSLTENGTHGSDSLESAQREIAFFFGEGEVCPRTR.

Residues K11, F59, R87, T93, R104, and N114 each coordinate ATP. H117 (pros-phosphohistidine intermediate) is an active-site residue.

This sequence belongs to the NDK family. Homotetramer. Mg(2+) is required as a cofactor.

The protein resides in the cytoplasm. The enzyme catalyses dZDP + ATP = dZTP + ADP. The catalysed reaction is a 2'-deoxyribonucleoside 5'-diphosphate + ATP = a 2'-deoxyribonucleoside 5'-triphosphate + ADP. It carries out the reaction a ribonucleoside 5'-diphosphate + ATP = a ribonucleoside 5'-triphosphate + ADP. It functions in the pathway purine metabolism. Functionally, major role in the synthesis of nucleoside triphosphates other than ATP. The ATP gamma phosphate is transferred to the NDP beta phosphate via a ping-pong mechanism, using a phosphorylated active-site intermediate. In terms of biological role, (Microbial infection) Catalyzes the phosphorylation of dZDP to dZTP, when the bacterium is infected by a phage that produces the substrate for the synthesis of dZTP (2- amino-2'-deoxyadenosine 5'-triphosphate), which is then used by the phage as a DNA polymerase substrate. This chain is Nucleoside diphosphate kinase, found in Salmonella paratyphi C (strain RKS4594).